The primary structure comprises 226 residues: uncharacterized protein (226 aa).

The N-terminal stretch at 1–18 is a signal peptide; the sequence is MRRIGLCISLLVTVLVMS.

This is an uncharacterized protein from Bacillus subtilis (strain 168).